Consider the following 280-residue polypeptide: 4-diphosphocytidyl-2-C-methyl-D-erythritol kinase (280 aa).

The active site involves lysine 11. Residue 95 to 105 coordinates ATP; the sequence is PVGAGLGGGSS. The active site involves aspartate 137.

The protein belongs to the GHMP kinase family. IspE subfamily.

The enzyme catalyses 4-CDP-2-C-methyl-D-erythritol + ATP = 4-CDP-2-C-methyl-D-erythritol 2-phosphate + ADP + H(+). It participates in isoprenoid biosynthesis; isopentenyl diphosphate biosynthesis via DXP pathway; isopentenyl diphosphate from 1-deoxy-D-xylulose 5-phosphate: step 3/6. Functionally, catalyzes the phosphorylation of the position 2 hydroxy group of 4-diphosphocytidyl-2C-methyl-D-erythritol. The sequence is that of 4-diphosphocytidyl-2-C-methyl-D-erythritol kinase from Geobacter sp. (strain M21).